A 399-amino-acid polypeptide reads, in one-letter code: Pyridinium-3,5-bisthiocarboxylic acid mononucleotide nickel insertion protein (399 aa).

This sequence belongs to the LarC family.

The catalysed reaction is Ni(II)-pyridinium-3,5-bisthiocarboxylate mononucleotide = pyridinium-3,5-bisthiocarboxylate mononucleotide + Ni(2+). Functionally, involved in the biosynthesis of a nickel-pincer cofactor ((SCS)Ni(II) pincer complex). Binds Ni(2+), and functions in nickel delivery to pyridinium-3,5-bisthiocarboxylic acid mononucleotide (P2TMN), to form the mature cofactor. Is thus probably required for the activation of nickel-pincer cofactor-dependent enzymes. The sequence is that of Pyridinium-3,5-bisthiocarboxylic acid mononucleotide nickel insertion protein from Clostridium kluyveri (strain ATCC 8527 / DSM 555 / NBRC 12016 / NCIMB 10680 / K1).